Consider the following 352-residue polypeptide: Respiratory nitrate reductase subunit beta (352 aa).

Residues 20-48 form the 4Fe-4S ferredoxin-type 1 domain; the sequence is VAMVMDLNKCIGCQTCTVACKSLWTEGGG. Residues cysteine 29, cysteine 32, cysteine 35, and cysteine 39 each coordinate [4Fe-4S] cluster. Disordered stretches follow at residues 63-95 and 111-131; these read KGYP…KEDY and SDRP…DEDQ. The span at 78–95 shows a compositional bias: basic and acidic residues; that stretch reads SSEHKERKPGQIPDKEDY. 4Fe-4S ferredoxin-type domains are found at residues 139–170 and 172–201; these read SYYF…KREE and GIVL…YNAT. Cysteine 148, cysteine 151, and cysteine 156 together coordinate [4Fe-4S] cluster. 3 residues coordinate [3Fe-4S] cluster: cysteine 160, cysteine 181, and cysteine 187. The [4Fe-4S] cluster site is built by cysteine 191, cysteine 208, cysteine 211, cysteine 229, and cysteine 233.

Probable multiprotein complex; a catalytic heterodimer of an alpha and beta chain is proposed to associate with additional subunits involved in membrane attachment and electron transfer. [4Fe-4S] cluster is required as a cofactor. It depends on [3Fe-4S] cluster as a cofactor.

The protein resides in the cell membrane. The catalysed reaction is nitrate + a quinol = a quinone + nitrite + H2O. Its activity is regulated as follows. Inhibited by cyanide, azide and antimycin A. Enzyme stability is not dependent on salt concentration. Its function is as follows. The respiratory membrane-bound nitrate reductase enzyme complex plays a role in generation of metabolic energy by using nitrate as a terminal electron acceptor during anaerobic conditions. The beta chain is an electron transfer unit containing four cysteine clusters involved in the formation of iron-sulfur centers. This Haloferax mediterranei (strain ATCC 33500 / DSM 1411 / JCM 8866 / NBRC 14739 / NCIMB 2177 / R-4) (Halobacterium mediterranei) protein is Respiratory nitrate reductase subunit beta (narH).